The sequence spans 293 residues: Ribonuclease HIII (293 aa).

One can recognise an RNase H type-2 domain in the interval 78–293 (LPLIGTDEVG…TEKAKKRLER (216 aa)). The a divalent metal cation site is built by Asp84, Glu85, and Asp187.

The protein belongs to the RNase HII family. RnhC subfamily. Mn(2+) is required as a cofactor. Mg(2+) serves as cofactor.

The protein resides in the cytoplasm. The catalysed reaction is Endonucleolytic cleavage to 5'-phosphomonoester.. Endonuclease that specifically degrades the RNA of RNA-DNA hybrids. In Streptococcus pneumoniae (strain Taiwan19F-14), this protein is Ribonuclease HIII.